The sequence spans 527 residues: Glutamate--cysteine ligase (527 aa).

The protein belongs to the glutamate--cysteine ligase type 1 family. Type 1 subfamily.

It carries out the reaction L-cysteine + L-glutamate + ATP = gamma-L-glutamyl-L-cysteine + ADP + phosphate + H(+). Its pathway is sulfur metabolism; glutathione biosynthesis; glutathione from L-cysteine and L-glutamate: step 1/2. This Pseudomonas aeruginosa (strain LESB58) protein is Glutamate--cysteine ligase.